The chain runs to 765 residues: ATP-dependent zinc metalloprotease FtsH (765 aa).

Residues 1 to 27 (MSNTSNFNERVTENAKPPKNVKSIIWK) lie on the Cytoplasmic side of the membrane. A helical membrane pass occupies residues 28–48 (TIGIIIVMAIIIGLILFYVLP). Residues 49–213 (RNTIANISNI…NVQLPNQSTA (165 aa)) lie on the Extracellular side of the membrane. Residues 214 to 234 (ILTQFLTSIIPFVILIVIYIV) traverse the membrane as a helical segment. At 235–765 (IARRFSRTMG…EPTASTASSN (531 aa)) the chain is on the cytoplasmic side. Position 314–321 (314–321 (GPPGTGKT)) interacts with ATP. A Zn(2+)-binding site is contributed by His-536. The active site involves Glu-537. Zn(2+) is bound by residues His-540 and Asp-615. Residues 730–748 (KAAAEKEEQAEKAKLDHQS) are compositionally biased toward basic and acidic residues. The interval 730–765 (KAAAEKEEQAEKAKLDHQSDSAQPQEEPTASTASSN) is disordered. The segment covering 749–765 (DSAQPQEEPTASTASSN) has biased composition (polar residues).

In the central section; belongs to the AAA ATPase family. This sequence in the C-terminal section; belongs to the peptidase M41 family. In terms of assembly, homohexamer. It depends on Zn(2+) as a cofactor.

Its subcellular location is the cell membrane. Functionally, acts as a processive, ATP-dependent zinc metallopeptidase for both cytoplasmic and membrane proteins. Plays a role in the quality control of integral membrane proteins. The chain is ATP-dependent zinc metalloprotease FtsH from Mycoplasmoides gallisepticum (strain R(high / passage 156)) (Mycoplasma gallisepticum).